The following is a 297-amino-acid chain: Bifunctional protein FolD 2 (297 aa).

NADP(+) is bound by residues 172 to 174 (GRG), T199, and V240.

This sequence belongs to the tetrahydrofolate dehydrogenase/cyclohydrolase family. Homodimer.

The enzyme catalyses (6R)-5,10-methylene-5,6,7,8-tetrahydrofolate + NADP(+) = (6R)-5,10-methenyltetrahydrofolate + NADPH. It catalyses the reaction (6R)-5,10-methenyltetrahydrofolate + H2O = (6R)-10-formyltetrahydrofolate + H(+). It participates in one-carbon metabolism; tetrahydrofolate interconversion. Its function is as follows. Catalyzes the oxidation of 5,10-methylenetetrahydrofolate to 5,10-methenyltetrahydrofolate and then the hydrolysis of 5,10-methenyltetrahydrofolate to 10-formyltetrahydrofolate. The polypeptide is Bifunctional protein FolD 2 (Paenarthrobacter aurescens (strain TC1)).